A 1227-amino-acid chain; its full sequence is DNA-directed RNA polymerase subunit beta (1227 aa).

The protein belongs to the RNA polymerase beta chain family. The RNAP catalytic core consists of 2 alpha, 1 beta, 1 beta' and 1 omega subunit. When a sigma factor is associated with the core the holoenzyme is formed, which can initiate transcription.

The catalysed reaction is RNA(n) + a ribonucleoside 5'-triphosphate = RNA(n+1) + diphosphate. Its function is as follows. DNA-dependent RNA polymerase catalyzes the transcription of DNA into RNA using the four ribonucleoside triphosphates as substrates. This chain is DNA-directed RNA polymerase subunit beta, found in Chloroflexus aggregans (strain MD-66 / DSM 9485).